Consider the following 330-residue polypeptide: MQERTYDITIIGGGPVGLFAAFYAGLRGMTVKIIESLSELGGQPAVLYPEKVIYDIPAYPALTGAELTQKLIEQLSRFDDRIAVCLKEEVLSFEKVDGDFVIQTSKARHYSKAIIVACGNGAFAPRTLGLDNEQLFADHNLFYNVHSLNQFAGKRVVICGGGDSAVDWALALDGLAKSVTLVHRRDAFRAHEHSVELLKNSHVTTLTPFVPLALEGENGFVNKMTIQKVKSEEEITLELDSLIVSFGFSTSNKNLKHWNLDYKRSSLLVSPLFQTSQEGIFAIGDAAAYEGRVDLIATGFGEAPIAVNQAIKYIYPDRDNRPVHSTALID.

FAD contacts are provided by Glu35, Gln43, Tyr48, Val90, Phe123, Asp285, and Thr326.

Belongs to the ferredoxin--NADP reductase type 2 family. Homodimer. FAD is required as a cofactor.

The enzyme catalyses 2 reduced [2Fe-2S]-[ferredoxin] + NADP(+) + H(+) = 2 oxidized [2Fe-2S]-[ferredoxin] + NADPH. The protein is Ferredoxin--NADP reductase of Streptococcus equi subsp. zooepidemicus (strain MGCS10565).